A 353-amino-acid chain; its full sequence is Small ribosomal subunit biogenesis GTPase RsgA (353 aa).

Residues 1-17 (MSKNKLSKGQQRRVNAN) show a composition bias toward polar residues. The disordered stretch occupies residues 1–25 (MSKNKLSKGQQRRVNANHQRRLKTT). The CP-type G domain occupies 104–274 (ASVLTRPDFY…VIDSPGVREF (171 aa)). GTP contacts are provided by residues 160-163 (NKID) and 214-222 (GQSGVGKSS). Zn(2+) is bound by residues cysteine 298, cysteine 303, histidine 305, and cysteine 311.

It belongs to the TRAFAC class YlqF/YawG GTPase family. RsgA subfamily. Monomer. Associates with 30S ribosomal subunit, binds 16S rRNA. Zn(2+) serves as cofactor.

The protein resides in the cytoplasm. One of several proteins that assist in the late maturation steps of the functional core of the 30S ribosomal subunit. Helps release RbfA from mature subunits. May play a role in the assembly of ribosomal proteins into the subunit. Circularly permuted GTPase that catalyzes slow GTP hydrolysis, GTPase activity is stimulated by the 30S ribosomal subunit. This is Small ribosomal subunit biogenesis GTPase RsgA from Klebsiella pneumoniae (strain 342).